The following is a 197-amino-acid chain: Recombination protein RecR (197 aa).

Residues 56–71 (CVRCFSLTDAETCNFC) form a C4-type zinc finger. One can recognise a Toprim domain in the interval 79–174 (RVLCVVETFA…RVTRIAQGLP (96 aa)).

The protein belongs to the RecR family.

May play a role in DNA repair. It seems to be involved in an RecBC-independent recombinational process of DNA repair. It may act with RecF and RecO. This is Recombination protein RecR from Myxococcus xanthus (strain DK1622).